The chain runs to 533 residues: NAD(P)H-quinone oxidoreductase chain 4 (533 aa).

15 consecutive transmembrane segments (helical) span residues valine 5–valine 25, tryptophan 36–glycine 56, valine 70–proline 90, leucine 91–phenylalanine 111, leucine 115–aspartate 135, leucine 137–tryptophan 157, phenylalanine 169–phenylalanine 189, glycine 210–valine 230, threonine 244–leucine 264, phenylalanine 278–phenylalanine 298, methionine 315–leucine 335, glutamine 336–aspartate 356, phenylalanine 377–valine 397, valine 418–methionine 438, and valine 465–methionine 485.

This sequence belongs to the complex I subunit 4 family.

It is found in the cellular thylakoid membrane. It catalyses the reaction a plastoquinone + NADH + (n+1) H(+)(in) = a plastoquinol + NAD(+) + n H(+)(out). It carries out the reaction a plastoquinone + NADPH + (n+1) H(+)(in) = a plastoquinol + NADP(+) + n H(+)(out). Its function is as follows. NDH-1 shuttles electrons from NAD(P)H, via FMN and iron-sulfur (Fe-S) centers, to quinones in the respiratory chain. The immediate electron acceptor for the enzyme in this species is believed to be plastoquinone. Couples the redox reaction to proton translocation (for every two electrons transferred, four hydrogen ions are translocated across the cytoplasmic membrane), and thus conserves the redox energy in a proton gradient. This chain is NAD(P)H-quinone oxidoreductase chain 4, found in Synechococcus sp. (strain CC9605).